The following is a 361-amino-acid chain: Teichoic acids export ATP-binding protein TagH (361 aa).

The region spanning 13-246 is the ABC transporter domain; that stretch reads TKEYDLYKSQ…YREFTKWFKG (234 aa). 60–67 contributes to the ATP binding site; that stretch reads GVNGSGKS. A unknown region spans residues 247–361; sequence QSKKEKKHFQ…HDTNATSGVK (115 aa).

It belongs to the ABC transporter superfamily. Teichoic acids exporter (TC 3.A.1.104.1) family. In terms of assembly, the complex is composed of two ATP-binding proteins (TagH) and two transmembrane proteins (TagG).

It localises to the cell membrane. The catalysed reaction is ATP + H2O + teichoic acidSide 1 = ADP + phosphate + teichoic acidSide 2.. In terms of biological role, part of the ABC transporter complex TagGH involved in teichoic acids export. Responsible for energy coupling to the transport system. This chain is Teichoic acids export ATP-binding protein TagH, found in Levilactobacillus brevis (strain ATCC 367 / BCRC 12310 / CIP 105137 / JCM 1170 / LMG 11437 / NCIMB 947 / NCTC 947) (Lactobacillus brevis).